A 273-amino-acid polypeptide reads, in one-letter code: 2,3,4,5-tetrahydropyridine-2,6-dicarboxylate N-succinyltransferase (273 aa).

Substrate is bound by residues R104 and D141.

It belongs to the transferase hexapeptide repeat family. As to quaternary structure, homotrimer.

It is found in the cytoplasm. The catalysed reaction is (S)-2,3,4,5-tetrahydrodipicolinate + succinyl-CoA + H2O = (S)-2-succinylamino-6-oxoheptanedioate + CoA. Its pathway is amino-acid biosynthesis; L-lysine biosynthesis via DAP pathway; LL-2,6-diaminopimelate from (S)-tetrahydrodipicolinate (succinylase route): step 1/3. The sequence is that of 2,3,4,5-tetrahydropyridine-2,6-dicarboxylate N-succinyltransferase from Psychrobacter sp. (strain PRwf-1).